A 687-amino-acid polypeptide reads, in one-letter code: Epithelial splicing regulatory protein 1 (687 aa).

3 RRM domains span residues 226-303 (TIIR…KATG), 327-407 (VIVR…RSTA), and 446-526 (DCIR…QCSA).

This sequence belongs to the ESRP family.

The protein resides in the nucleus. In terms of biological role, mRNA splicing factor that regulates the formation of epithelial cell-specific isoforms. Specifically regulates the expression of FGFR2-IIIb, an epithelial cell-specific isoform of fgfr2. Acts by directly binding specific sequences in mRNAs. Binds the GU-rich sequence motifs in the ISE/ISS-3, a cis-element regulatory region present in the mRNA of fgfr2. The polypeptide is Epithelial splicing regulatory protein 1 (esrp1) (Xenopus tropicalis (Western clawed frog)).